The primary structure comprises 261 residues: Ribosomal RNA small subunit methyltransferase J (261 aa).

S-adenosyl-L-methionine is bound by residues R109–D110, E125–R126, and D179.

It belongs to the methyltransferase superfamily. RsmJ family.

The protein localises to the cytoplasm. The catalysed reaction is guanosine(1516) in 16S rRNA + S-adenosyl-L-methionine = N(2)-methylguanosine(1516) in 16S rRNA + S-adenosyl-L-homocysteine + H(+). Its function is as follows. Specifically methylates the guanosine in position 1516 of 16S rRNA. The chain is Ribosomal RNA small subunit methyltransferase J from Pseudomonas aeruginosa (strain ATCC 15692 / DSM 22644 / CIP 104116 / JCM 14847 / LMG 12228 / 1C / PRS 101 / PAO1).